Consider the following 346-residue polypeptide: Probable choline kinase 1 (346 aa).

Residues Arg-73, Gln-210, and Asp-227 each coordinate ATP.

The protein belongs to the choline/ethanolamine kinase family. Expressed in roots. Expressed at low levels in cauline leaves and flowers.

The catalysed reaction is choline + ATP = phosphocholine + ADP + H(+). Its pathway is phospholipid metabolism; phosphatidylcholine biosynthesis; phosphocholine from choline: step 1/1. Its function is as follows. Involved in phospholipid biosynthesis. Catalyzes the first step in phosphatidylcholine biosynthesis. The sequence is that of Probable choline kinase 1 (CK1) from Arabidopsis thaliana (Mouse-ear cress).